The following is a 428-amino-acid chain: Serine--tRNA ligase (428 aa).

235–237 lines the L-serine pocket; the sequence is TAE. 266–268 contributes to the ATP binding site; it reads RSE. Glutamate 289 is a binding site for L-serine. 353 to 356 contacts ATP; that stretch reads EISS. Residue serine 389 participates in L-serine binding.

It belongs to the class-II aminoacyl-tRNA synthetase family. Type-1 seryl-tRNA synthetase subfamily. In terms of assembly, homodimer. The tRNA molecule binds across the dimer.

It is found in the cytoplasm. The enzyme catalyses tRNA(Ser) + L-serine + ATP = L-seryl-tRNA(Ser) + AMP + diphosphate + H(+). The catalysed reaction is tRNA(Sec) + L-serine + ATP = L-seryl-tRNA(Sec) + AMP + diphosphate + H(+). It participates in aminoacyl-tRNA biosynthesis; selenocysteinyl-tRNA(Sec) biosynthesis; L-seryl-tRNA(Sec) from L-serine and tRNA(Sec): step 1/1. Catalyzes the attachment of serine to tRNA(Ser). Is also able to aminoacylate tRNA(Sec) with serine, to form the misacylated tRNA L-seryl-tRNA(Sec), which will be further converted into selenocysteinyl-tRNA(Sec). The sequence is that of Serine--tRNA ligase from Shewanella baltica (strain OS155 / ATCC BAA-1091).